We begin with the raw amino-acid sequence, 356 residues long: 3-dehydroquinate synthase (356 aa).

Residues 71-76 (EGEASK), 105-109 (GVTGD), 129-130 (TS), Lys-142, and Lys-151 contribute to the NAD(+) site. The Zn(2+) site is built by Glu-184, His-247, and His-264.

The protein belongs to the sugar phosphate cyclases superfamily. Dehydroquinate synthase family. The cofactor is Co(2+). It depends on Zn(2+) as a cofactor. NAD(+) is required as a cofactor.

Its subcellular location is the cytoplasm. It catalyses the reaction 7-phospho-2-dehydro-3-deoxy-D-arabino-heptonate = 3-dehydroquinate + phosphate. The protein operates within metabolic intermediate biosynthesis; chorismate biosynthesis; chorismate from D-erythrose 4-phosphate and phosphoenolpyruvate: step 2/7. Its function is as follows. Catalyzes the conversion of 3-deoxy-D-arabino-heptulosonate 7-phosphate (DAHP) to dehydroquinate (DHQ). This Lactococcus lactis subsp. cremoris (strain MG1363) protein is 3-dehydroquinate synthase.